The chain runs to 275 residues: Ribosomal protein L11 methyltransferase (275 aa).

The S-adenosyl-L-methionine site is built by threonine 123, glycine 146, aspartate 167, and asparagine 208.

This sequence belongs to the methyltransferase superfamily. PrmA family.

It localises to the cytoplasm. It carries out the reaction L-lysyl-[protein] + 3 S-adenosyl-L-methionine = N(6),N(6),N(6)-trimethyl-L-lysyl-[protein] + 3 S-adenosyl-L-homocysteine + 3 H(+). Its function is as follows. Methylates ribosomal protein L11. This chain is Ribosomal protein L11 methyltransferase, found in Campylobacter fetus subsp. fetus (strain 82-40).